The primary structure comprises 353 residues: Beta-agarase B (353 aa).

The first 17 residues, 1 to 17 (MYLIYLRLVFCCALLLG), serve as a signal peptide directing secretion. C18 carries N-palmitoyl cysteine lipidation. Residue C18 is the site of S-diacylglycerol cysteine attachment. Positions 30 to 58 (LPVEQEQEQETEQEGEPEESSEQDLVEEV) are disordered. Residues 32 to 58 (VEQEQEQETEQEGEPEESSEQDLVEEV) are compositionally biased toward acidic residues. The 296-residue stretch at 58–353 (VDWKDIPVPA…WIRIYKPVEK (296 aa)) folds into the GH16 domain. Substrate contacts are provided by residues 105 to 107 (YHN) and D181. The active-site Nucleophile is E184. E189 serves as the catalytic Proton donor. Substrate-binding residues include H215, R219, D224, Q226, and E308.

Belongs to the glycosyl hydrolase 16 family. In terms of assembly, homodimer.

Its subcellular location is the cell outer membrane. The catalysed reaction is Hydrolysis of (1-&gt;4)-beta-D-galactosidic linkages in agarose, giving the tetramer as the predominant product.. Its function is as follows. Cleaves the beta-1,4-linkages between beta-D-galactose and alpha-L-3,6-anhydro-galactose residues in agarose. Cleaves agarose in a random manner with retention of the anomeric-bond configuration, producing beta-anomers that give rise progressively to alpha-anomers when mutarotation takes place. Also tolerant to hybrid substrates containing C6-sulfate groups at the -4, +1, and +3 positions. This chain is Beta-agarase B (agaB), found in Zobellia galactanivorans (strain DSM 12802 / CCUG 47099 / CIP 106680 / NCIMB 13871 / Dsij).